Here is a 402-residue protein sequence, read N- to C-terminus: Plasminogen activator inhibitor 1 (402 aa).

The signal sequence occupies residues 1 to 23 (MQMSPALTCLVLGLALVFGEGSA). 3 N-linked (GlcNAc...) asparagine glycosylation sites follow: N232, N288, and N352.

The protein belongs to the serpin family. Forms a heterodimer with TMPRSS7. Interacts with VTN. Binds LRP1B; binding is followed by internalization and degradation. Interacts with PPP1CB. In complex with PLAU/uPA, interacts with PLAUR/uPAR. Interacts with SORL1 and LRP1, either alone or in complex with PLAU; these interactions are abolished in the presence of LRPAP1/RAP. The ternary complex composed of PLAUR-PLAU-PAI1 also interacts with SORL1. Interacts with PLAT/tPA. Also interacts with SORL1, when complexed to PLAT/tPA. In terms of processing, inactivated by proteolytic attack of the urokinase-type (u-PA) and the tissue-type (TPA), cleaving the 369-Arg-|-Met-370 bond. Expressed in endothelial cells. Found in plasma, platelets, and hepatoma and fibrosarcoma cells.

The protein resides in the secreted. In terms of biological role, serine protease inhibitor. Inhibits TMPRSS7. Is a primary inhibitor of tissue-type plasminogen activator (PLAT) and urokinase-type plasminogen activator (PLAU). As PLAT inhibitor, it is required for fibrinolysis down-regulation and is responsible for the controlled degradation of blood clots. As PLAU inhibitor, it is involved in the regulation of cell adhesion and spreading. Acts as a regulator of cell migration, independently of its role as protease inhibitor. It is required for stimulation of keratinocyte migration during cutaneous injury repair. It is involved in cellular and replicative senescence. Plays a role in alveolar type 2 cells senescence in the lung. Is involved in the regulation of cementogenic differentiation of periodontal ligament stem cells, and regulates odontoblast differentiation and dentin formation during odontogenesis. The polypeptide is Plasminogen activator inhibitor 1 (SERPINE1) (Homo sapiens (Human)).